We begin with the raw amino-acid sequence, 148 residues long: Outer envelope pore protein 16-1, chloroplastic (148 aa).

A contains 4 beta strands region spans residues proline 2–glutamate 73. 3 helical membrane-spanning segments follow: residues valine 75–isoleucine 91, asparagine 102–glycine 118, and isoleucine 125–valine 142.

It belongs to the Tim17/Tim22/Tim23 family. Plastid outer envelope porin OEP16 (TC 1.B.30) subfamily. In terms of assembly, homodimer and oligomers in membrane. Forms large complexes including TOC33, pPORA and OEP161 during pPORA import into plastids at the plastid envelope membrane. As to expression, expressed predominantly in leaves and cotyledons.

It localises to the plastid. The protein localises to the chloroplast outer membrane. It is found in the etioplast membrane. Its activity is regulated as follows. Stimulated by GTP. Its function is as follows. Voltage-dependent high-conductance channel with a slight cation-selectivity; selective for amino acids but excludes triosephosphates or uncharged sugars. Non-essential amino acid-selective channel protein and translocation pore for NADPH:protochlorophyllide oxidoreductase A (PORA) and possibly PORB. Involved in PORA precursor (pPORA) import and thus confers photoprotection onto etiolated seedlings during greening. This Arabidopsis thaliana (Mouse-ear cress) protein is Outer envelope pore protein 16-1, chloroplastic (OEP161).